The sequence spans 102 residues: Cytochrome b (102 aa).

A run of 3 helical transmembrane segments spans residues 1–21, 45–66, and 81–101; these read FGSLLGLCLATQILTGLFLAM, WLIRNIHANGASFFFICIYLHI, and WNIGVVLLLLVMMTAFVGYVL. 2 residues coordinate heme b: H51 and H65.

It belongs to the cytochrome b family. In terms of assembly, the cytochrome bc1 complex contains 3 respiratory subunits (MT-CYB, CYC1 and UQCRFS1), 2 core proteins (UQCRC1 and UQCRC2) and probably 6 low-molecular weight proteins. Heme b serves as cofactor.

The protein resides in the mitochondrion inner membrane. Component of the ubiquinol-cytochrome c reductase complex (complex III or cytochrome b-c1 complex) that is part of the mitochondrial respiratory chain. The b-c1 complex mediates electron transfer from ubiquinol to cytochrome c. Contributes to the generation of a proton gradient across the mitochondrial membrane that is then used for ATP synthesis. The sequence is that of Cytochrome b (mt-cyb) from Megalops atlanticus (Tarpon).